A 615-amino-acid chain; its full sequence is 1-deoxy-D-xylulose-5-phosphate synthase (615 aa).

Residues His72 and 111–113 (GHS) each bind thiamine diphosphate. Asp142 provides a ligand contact to Mg(2+). Thiamine diphosphate is bound by residues 143–144 (GA), Asn171, Tyr278, and Glu360. A Mg(2+)-binding site is contributed by Asn171.

The protein belongs to the transketolase family. DXPS subfamily. In terms of assembly, homodimer. Mg(2+) is required as a cofactor. Thiamine diphosphate serves as cofactor.

The enzyme catalyses D-glyceraldehyde 3-phosphate + pyruvate + H(+) = 1-deoxy-D-xylulose 5-phosphate + CO2. Its pathway is metabolic intermediate biosynthesis; 1-deoxy-D-xylulose 5-phosphate biosynthesis; 1-deoxy-D-xylulose 5-phosphate from D-glyceraldehyde 3-phosphate and pyruvate: step 1/1. Catalyzes the acyloin condensation reaction between C atoms 2 and 3 of pyruvate and glyceraldehyde 3-phosphate to yield 1-deoxy-D-xylulose-5-phosphate (DXP). This chain is 1-deoxy-D-xylulose-5-phosphate synthase, found in Campylobacter jejuni subsp. jejuni serotype O:2 (strain ATCC 700819 / NCTC 11168).